The following is a 368-amino-acid chain: tRNA/tmRNA (uracil-C(5))-methyltransferase (368 aa).

S-adenosyl-L-methionine-binding residues include Gln192, Tyr220, Asn225, Glu241, and Asp301. Residue Cys326 is the Nucleophile of the active site. Glu360 serves as the catalytic Proton acceptor.

This sequence belongs to the class I-like SAM-binding methyltransferase superfamily. RNA M5U methyltransferase family. TrmA subfamily.

It catalyses the reaction uridine(54) in tRNA + S-adenosyl-L-methionine = 5-methyluridine(54) in tRNA + S-adenosyl-L-homocysteine + H(+). The enzyme catalyses uridine(341) in tmRNA + S-adenosyl-L-methionine = 5-methyluridine(341) in tmRNA + S-adenosyl-L-homocysteine + H(+). Its function is as follows. Dual-specificity methyltransferase that catalyzes the formation of 5-methyluridine at position 54 (m5U54) in all tRNAs, and that of position 341 (m5U341) in tmRNA (transfer-mRNA). This chain is tRNA/tmRNA (uracil-C(5))-methyltransferase, found in Actinobacillus pleuropneumoniae serotype 3 (strain JL03).